We begin with the raw amino-acid sequence, 375 residues long: B3 domain-containing protein REM-like 2 (375 aa).

3 DNA-binding regions (TF-B3) span residues 51–147 (SFVA…KRLY), 131–226 (FVTV…YGTN), and 277–375 (RLVI…KSGK).

The protein resides in the nucleus. The sequence is that of B3 domain-containing protein REM-like 2 from Arabidopsis thaliana (Mouse-ear cress).